A 536-amino-acid chain; its full sequence is Serine protease inhibitor 28Dc (536 aa).

Residues 1–16 (MWRLLLALLLVSSVCC) form the signal peptide. The N-linked (GlcNAc...) asparagine glycan is linked to Asn355.

It belongs to the serpin family.

It is found in the secreted. Its function is as follows. Serine protease inhibitor which is required for pupal viability and plays an essential role in regulating the melanization reaction. Inhibits spontaneous melanization and appears to be involved in the melanization immune response to physical wounding in larvae and adults. Acts by negatively regulating the Hayan-phenoloxidase (PPO1) cascade in the hemolymph and possibly the trachea. May function by controlling the initial release of the activated form of PPO1, phenoloxidase (PO) and thus maintains PO availability for processes such as wound response and pigmentation. In Drosophila melanogaster (Fruit fly), this protein is Serine protease inhibitor 28Dc.